We begin with the raw amino-acid sequence, 412 residues long: Membrane fusion protein MtrC (412 aa).

An N-terminal signal peptide occupies residues 1 to 24 (MAFYASKAMRAAALAAAVALALSS). Residue C25 is the site of N-palmitoyl cysteine attachment. C25 carries the S-diacylglycerol cysteine lipid modification. A disordered region spans residues 377–412 (AKKVTPKEWAPSENQAAAPQAGVQTASEAKPASEAK). Positions 388 to 403 (SENQAAAPQAGVQTAS) are enriched in polar residues.

This sequence belongs to the membrane fusion protein (MFP) (TC 8.A.1) family.

The protein resides in the cell inner membrane. In terms of biological role, cell membrane lipoprotein, involved in cell membrane permeability to hydrophobic compounds such as antibiotics, dyes and detergents. The polypeptide is Membrane fusion protein MtrC (mtrC) (Neisseria gonorrhoeae).